The following is a 469-amino-acid chain: Serine/threonine-protein kinases PknA (469 aa).

Residues 20–281 enclose the Protein kinase domain; sequence YRLQWIIGHG…NEMALAVSAV (262 aa). Residues 26–34 and Lys49 each bind ATP; that span reads IGHGGMSTV. Catalysis depends on Asp148, which acts as the Proton acceptor. Disordered regions lie at residues 286–307 and 359–454; these read RPPQ…PSES and FNDT…PADD. 2 stretches are compositionally biased toward low complexity: residues 365-384 and 399-413; these read ETTT…EETT and TEPE…TSEE. Polar residues predominate over residues 430–443; sequence VPQIPTSTPRTSAS.

The protein belongs to the protein kinase superfamily. Ser/Thr protein kinase family.

The catalysed reaction is L-seryl-[protein] + ATP = O-phospho-L-seryl-[protein] + ADP + H(+). The enzyme catalyses L-threonyl-[protein] + ATP = O-phospho-L-threonyl-[protein] + ADP + H(+). The polypeptide is Serine/threonine-protein kinases PknA (pknA) (Corynebacterium glutamicum (strain ATCC 13032 / DSM 20300 / JCM 1318 / BCRC 11384 / CCUG 27702 / LMG 3730 / NBRC 12168 / NCIMB 10025 / NRRL B-2784 / 534)).